The sequence spans 59 residues: Large ribosomal subunit protein uL30 (59 aa).

It belongs to the universal ribosomal protein uL30 family. In terms of assembly, part of the 50S ribosomal subunit.

The protein is Large ribosomal subunit protein uL30 of Clostridium botulinum (strain ATCC 19397 / Type A).